The chain runs to 690 residues: MLLLPRCPVIGRIVRSKFRSGLIRNHSPVIFTVSKLSTQRPLLFNSAVNLWNQAQKDITHKKSVEQFSSAPKVKTQVKKTSKAPTLSELKILKDLFRYIWPKGNNKVRIRVLIALGLLISAKILNVQVPFFFKQTIDSMNIAWDDPTVALPAAIGLTILCYGVARFGSVLFGELRNAVFAKVAQNAIRTVSLQTFQHLMKLDLGWHLSRQTGGLTRAMDRGTKGISQVLTAMVFHIIPISFEISVVCGILTYQFGASFAAITFSTMLLYSIFTIKTTAWRTHFRRDANKADNKAASVALDSLINFEAVKYFNNEKYLADKYNGSLMNYRDSQIKVSQSLAFLNSGQNLIFTTALTAMMYMGCTGVIGGNLTVGDLVLINQLVFQLSVPLNFLGSVYRDLKQSLIDMETLFKLRKNEVKIKNAERPLMLPENVPYDITFENVTFGYHPDRKILKNASFTIPAGWKTAIVGSSGSGKSTILKLVFRFYDPESGRILINGRDIKEYDIDALRKVIGVVPQDTPLFNDTIWENVKFGRIDATDEEVITVVEKAQLAPLIKKLPQGFDTIVGERGLMISGGEKQRLAIARVLLKNARIMFFDEATSALDTHTEQALLRTIRDNFTSGSRTSVYIAHRLRTIADADKIIVLDNGRVREEGKHLELLAMPGSLYRELWTIQEDLDHLENELKDQQEL.

The N-terminal 26 residues, 1–26 (MLLLPRCPVIGRIVRSKFRSGLIRNH), are a transit peptide targeting the mitochondrion. The Mitochondrial matrix segment spans residues 27-110 (SPVIFTVSKL…PKGNNKVRIR (84 aa)). Residues 111–132 (VLIALGLLISAKILNVQVPFFF) form a helical membrane-spanning segment. The region spanning 111–401 (VLIALGLLIS…LGSVYRDLKQ (291 aa)) is the ABC transmembrane type-1 domain. The Mitochondrial intermembrane segment spans residues 133–155 (KQTIDSMNIAWDDPTVALPAAIG). A helical transmembrane segment spans residues 156–179 (LTILCYGVARFGSVLFGELRNAVF). The Mitochondrial matrix segment spans residues 180 to 228 (AKVAQNAIRTVSLQTFQHLMKLDLGWHLSRQTGGLTRAMDRGTKGISQV). The helical transmembrane segment at 229 to 252 (LTAMVFHIIPISFEISVVCGILTY) threads the bilayer. Position 253 (glutamine 253) is a topological domain, mitochondrial intermembrane. The helical transmembrane segment at 254-274 (FGASFAAITFSTMLLYSIFTI) threads the bilayer. Residues 275–340 (KTTAWRTHFR…SQIKVSQSLA (66 aa)) are Mitochondrial matrix-facing. Glutathione contacts are provided by residues 280 to 284 (RTHFR) and 343 to 346 (NSGQ). A helical transmembrane segment spans residues 341–359 (FLNSGQNLIFTTALTAMMY). The Mitochondrial intermembrane portion of the chain corresponds to 360–374 (MGCTGVIGGNLTVGD). Residues 375 to 396 (LVLINQLVFQLSVPLNFLGSVY) form a helical membrane-spanning segment. Glycine 393 contacts glutathione. Topologically, residues 397-690 (RDLKQSLIDM…ENELKDQQEL (294 aa)) are mitochondrial matrix. The 237-residue stretch at 436–672 (ITFENVTFGY…PGSLYRELWT (237 aa)) folds into the ABC transporter domain. ATP contacts are provided by residues tyrosine 445 and 469 to 480 (GSSGSGKSTILK).

This sequence belongs to the ABC transporter superfamily. ABCB family. Heavy Metal importer (TC 3.A.1.210) subfamily. In terms of assembly, homodimer.

The protein localises to the mitochondrion inner membrane. Its function is as follows. Performs an essential function in the generation of cytoplasmic iron-sulfur proteins by mediating the ATP-dependent export of Fe/S cluster precursors synthesized by NFS1 and other mitochondrial proteins. Hydrolyzes ATP. Binds glutathione and may function by transporting a glutathione-conjugated iron-sulfur compound. This Saccharomyces cerevisiae (strain ATCC 204508 / S288c) (Baker's yeast) protein is Iron-sulfur clusters transporter ATM1, mitochondrial.